A 226-amino-acid polypeptide reads, in one-letter code: Urease accessory protein UreF (226 aa).

Belongs to the UreF family. In terms of assembly, ureD, UreF and UreG form a complex that acts as a GTP-hydrolysis-dependent molecular chaperone, activating the urease apoprotein by helping to assemble the nickel containing metallocenter of UreC. The UreE protein probably delivers the nickel.

The protein resides in the cytoplasm. Required for maturation of urease via the functional incorporation of the urease nickel metallocenter. The polypeptide is Urease accessory protein UreF (Burkholderia mallei (strain NCTC 10247)).